The following is a 416-amino-acid chain: Serine hydroxymethyltransferase (416 aa).

Residues leucine 121 and glycine 125–leucine 127 each bind (6S)-5,6,7,8-tetrahydrofolate. The residue at position 230 (lysine 230) is an N6-(pyridoxal phosphate)lysine.

This sequence belongs to the SHMT family. In terms of assembly, homodimer. The cofactor is pyridoxal 5'-phosphate.

It localises to the cytoplasm. The enzyme catalyses (6R)-5,10-methylene-5,6,7,8-tetrahydrofolate + glycine + H2O = (6S)-5,6,7,8-tetrahydrofolate + L-serine. Its pathway is one-carbon metabolism; tetrahydrofolate interconversion. It functions in the pathway amino-acid biosynthesis; glycine biosynthesis; glycine from L-serine: step 1/1. Catalyzes the reversible interconversion of serine and glycine with tetrahydrofolate (THF) serving as the one-carbon carrier. This reaction serves as the major source of one-carbon groups required for the biosynthesis of purines, thymidylate, methionine, and other important biomolecules. Also exhibits THF-independent aldolase activity toward beta-hydroxyamino acids, producing glycine and aldehydes, via a retro-aldol mechanism. In Nitrosomonas eutropha (strain DSM 101675 / C91 / Nm57), this protein is Serine hydroxymethyltransferase.